Consider the following 565-residue polypeptide: MTHRNSRQDTKELKPIADIAATIGLSEDDIEAYGRYKAKVRLEAISRFHSRPDASLILVSAMTPTPAGEGKTTVSIGLAQALARLGKATIAALREPSLGPVFGMKGGATGGGLSRVHPVDDINLHFTNDFAAVESAHNLLSAIVDNSVYHDNILNIDPRKVTWRRVLDMNDRFLRNIVIGLGGSVNGVPRETGFDIVPSSEIMAILCLSRSYRELKEKIRRILVGFTYDDSPVMAGDLKVEGAVTALLKYALLPNLVQTTENVPAIIHGGPFANIAQGTSSILGTDLALRLADYVVTEAGFGFDLGAEKFFDIVAPYGGLNPRIVVLVATVRALKYHAGIAQADLDRSNPRAAVLGMANLRKHYQNIDKFHVSCVIALNRFSSDTDEEINAVVRAAENEGMNIAPCDIFRLGGEGGLELAEKTLELLAGTSCGYRRLYEWNQPVEDKIFTVASEIYGAVSIDYQPLARRNLDLINKYGFDKLPVCIAKTQQSLSDNPGLLGLPRDFIVTVREIRIASGAGFLIPITGEILRMPGLSKRPAAYSIDIDDSGNITGVGSPGGISSLS.

Residue 65 to 72 (TPAGEGKT) coordinates ATP.

Belongs to the formate--tetrahydrofolate ligase family.

It carries out the reaction (6S)-5,6,7,8-tetrahydrofolate + formate + ATP = (6R)-10-formyltetrahydrofolate + ADP + phosphate. It participates in one-carbon metabolism; tetrahydrofolate interconversion. The protein is Formate--tetrahydrofolate ligase of Syntrophus aciditrophicus (strain SB).